The primary structure comprises 299 residues: MKSLEYYRSQPKADVHTHLNLSMKYERYKQWSGVVIPNFPRKMRGLDEMHEIIGEYTRPQCKTAQDVLNLFTMSIEDAIADNVVVMETSVDIGFITHYEENLDHFLCDLSDLHRRYKRNVTLHFELGISKIRERSFVEQWAEPMMRSGIFENIDLYGPEISEGIEDFIYIFKLAEKYHLKKKAHVGEFSDAQSVRHFVEIFNLDEVQHGIGAATDENVLRFLAERKVRCNVCPTSNVMLNAVECLEKHPIKKMMDAGVRVGLGTDDLLFFGKTNSEQLFDMVSCGLITELHAEALLAVR.

Residues His-16 and His-18 each contribute to the Zn(2+) site. Substrate-binding residues include His-18 and Gly-157. His-184 is a Zn(2+) binding site. Residue Glu-187 is the Proton donor of the active site. Asp-265 lines the Zn(2+) pocket. Asp-266 is a binding site for substrate.

It belongs to the metallo-dependent hydrolases superfamily. Adenosine and AMP deaminases family. It depends on Zn(2+) as a cofactor.

Functionally, putative nucleoside deaminase. May catalyze the hydrolytic deamination of adenosine or some similar substrate and play a role in purine metabolism. The chain is Putative adenosine/adenine deaminase from Treponema pallidum (strain Nichols).